Consider the following 1234-residue polypeptide: DNA-directed RNA polymerase subunit beta (1234 aa).

It belongs to the RNA polymerase beta chain family. In terms of assembly, the RNAP catalytic core consists of 2 alpha, 1 beta, 1 beta' and 1 omega subunit. When a sigma factor is associated with the core the holoenzyme is formed, which can initiate transcription.

The catalysed reaction is RNA(n) + a ribonucleoside 5'-triphosphate = RNA(n+1) + diphosphate. Functionally, DNA-dependent RNA polymerase catalyzes the transcription of DNA into RNA using the four ribonucleoside triphosphates as substrates. In Clostridium perfringens (strain ATCC 13124 / DSM 756 / JCM 1290 / NCIMB 6125 / NCTC 8237 / Type A), this protein is DNA-directed RNA polymerase subunit beta.